The chain runs to 506 residues: Steroid (22S)-hydroxylase (506 aa).

A helical membrane pass occupies residues 12 to 32; that stretch reads LLFFLPFILLALLTFYTTTVA. Cys-449 is a heme binding site.

This sequence belongs to the cytochrome P450 family. Heme is required as a cofactor.

It localises to the membrane. It catalyses the reaction a C28-steroid + reduced [NADPH--hemoprotein reductase] + O2 = a (22S)-22-hydroxy C28-steroid + oxidized [NADPH--hemoprotein reductase] + H2O + H(+). The enzyme catalyses campesterol + reduced [NADPH--hemoprotein reductase] + O2 = (22S)-22-hydroxycampesterol + oxidized [NADPH--hemoprotein reductase] + H2O + H(+). The catalysed reaction is campestanol + reduced [NADPH--hemoprotein reductase] + O2 = 6-deoxycathasterone + oxidized [NADPH--hemoprotein reductase] + H2O + H(+). It participates in plant hormone biosynthesis; brassinosteroid biosynthesis. Its function is as follows. Catalyzes the C22-alpha-hydroxylation step in brassinosteroid biosynthesis, which is the rate-limiting step in this biosynthetic pathway. Catalyzes the conversion of campesterol (CR) to (22S)-22-hydroxycampesterol (22-OHCR, 22-hydroxyCR) and of campestanol (CN) to 6-deoxocathasterone (6-deoxoCT). The sequence is that of Steroid (22S)-hydroxylase from Oryza sativa subsp. indica (Rice).